A 409-amino-acid polypeptide reads, in one-letter code: NADH-quinone oxidoreductase subunit D (409 aa).

Belongs to the complex I 49 kDa subunit family. As to quaternary structure, NDH-1 is composed of 14 different subunits. Subunits NuoB, C, D, E, F, and G constitute the peripheral sector of the complex.

The protein resides in the cell inner membrane. It carries out the reaction a quinone + NADH + 5 H(+)(in) = a quinol + NAD(+) + 4 H(+)(out). NDH-1 shuttles electrons from NADH, via FMN and iron-sulfur (Fe-S) centers, to quinones in the respiratory chain. The immediate electron acceptor for the enzyme in this species is believed to be ubiquinone. Couples the redox reaction to proton translocation (for every two electrons transferred, four hydrogen ions are translocated across the cytoplasmic membrane), and thus conserves the redox energy in a proton gradient. This Helicobacter pylori (strain Shi470) protein is NADH-quinone oxidoreductase subunit D.